A 363-amino-acid polypeptide reads, in one-letter code: DNA replication and repair protein RecF (363 aa).

Residue 30 to 37 (GPNGSGKT) coordinates ATP.

Belongs to the RecF family.

The protein localises to the cytoplasm. Its function is as follows. The RecF protein is involved in DNA metabolism; it is required for DNA replication and normal SOS inducibility. RecF binds preferentially to single-stranded, linear DNA. It also seems to bind ATP. This is DNA replication and repair protein RecF from Chlorobium phaeobacteroides (strain BS1).